A 744-amino-acid chain; its full sequence is Junctophilin-3 (744 aa).

Topologically, residues 1 to 723 are cytoplasmic; that stretch reads MSSGGRFNFD…LKSSTGSAPI (723 aa). MORN repeat units lie at residues 15-37, 39-60, 61-82, 83-105, 107-129, and 130-152; these read YCGG…KGQG, YTGS…SGNT, YQGT…GKWV, YKGE…GNGA, YEGT…DGGT, and YQGQ…PYGM. Positions 230–252 are disordered; that stretch reads SKSSLASQRSKQSSFRSEAGMST. The segment covering 231-244 has biased composition (low complexity); the sequence is KSSLASQRSKQSSF. MORN repeat units lie at residues 288–310 and 311–333; these read YVGE…DGLK and YEGE…DGTK. At serine 440 the chain carries Phosphoserine. The residue at position 451 (threonine 451) is a Phosphothreonine. 2 disordered regions span residues 451-603 and 624-677; these read TPLQ…LLEP and CPQD…ESLR. At serine 457 the chain carries Phosphoserine. Threonine 471 carries the phosphothreonine modification. 2 positions are modified to phosphoserine: serine 475 and serine 506. A phosphoserine mark is found at serine 699 and serine 706. Residues 724-744 form a helical; Anchor for type IV membrane protein membrane-spanning segment; the sequence is LVVMVILLNIGVAILFINFFI.

It belongs to the junctophilin family. As to expression, specifically expressed in brain. Highest levels in the olfactory tubercle, caudate putamen, nucleus accumbens, hippocampal formation, piriform cortex and cerebellar cortex. Expressed in disctete neurons sites. In hippocampal formation, expressed in dendrites of hippocampal pyramidal and denate granule cells. In cerebellum, it is highly expressed in Purkinge cells, while it is weakly expressed in granular cells.

The protein localises to the cell membrane. The protein resides in the endoplasmic reticulum membrane. Functionally, junctophilins contribute to the formation of junctional membrane complexes (JMCs) which link the plasma membrane with the endoplasmic or sarcoplasmic reticulum in excitable cells. Provides a structural foundation for functional cross-talk between the cell surface and intracellular calcium release channels. JPH3 is brain-specific and appears to have an active role in certain neurons involved in motor coordination and memory. The sequence is that of Junctophilin-3 (Jph3) from Mus musculus (Mouse).